The primary structure comprises 211 residues: Methylthioribulose-1-phosphate dehydratase (211 aa).

Zn(2+) is bound by residues His-94 and His-96.

The protein belongs to the aldolase class II family. MtnB subfamily. The cofactor is Zn(2+).

It catalyses the reaction 5-(methylsulfanyl)-D-ribulose 1-phosphate = 5-methylsulfanyl-2,3-dioxopentyl phosphate + H2O. The protein operates within amino-acid biosynthesis; L-methionine biosynthesis via salvage pathway; L-methionine from S-methyl-5-thio-alpha-D-ribose 1-phosphate: step 2/6. Functionally, catalyzes the dehydration of methylthioribulose-1-phosphate (MTRu-1-P) into 2,3-diketo-5-methylthiopentyl-1-phosphate (DK-MTP-1-P). In Pseudoalteromonas translucida (strain TAC 125), this protein is Methylthioribulose-1-phosphate dehydratase.